The primary structure comprises 773 residues: MALFLLTCLLAVFSAATAQSSLLGPSSIFGPGEVNVLEGDSVSITCYYPTTSVTRHSRKFWCREEESGRCVTLASTGYTSQEYSGRGKLTDFPDKGEFVVTVDQLTQNDSGSYKCGVGVNGRGLDFGVNVLVSQKPEPDDVVYKQYESYTVTITCPFTYATRQLKKSFYKVEDGELVLIIDSSSKEAKDPRYKGRITLQIQSTTAKEFTVTIKHLQLNDAGQYVCQSGSDPTAEEQNVDLRLLTPGLLYGNLGGSVTFECALDSEDANAVASLRQVRGGNVVIDSQGTIDPAFEGRILFTKAENGHFSVVIAGLRKEDTGNYLCGVQSNGQSGDGPTQLRQLFVNEEIDVSRSPPVLKGFPGGSVTIRCPYNPKRSDSHLQLYLWEGSQTRHLLVDSGEGLVQKDYTGRLALFEEPGNGTFSVVLNQLTAEDEGFYWCVSDDDESLTTSVKLQIVDGEPSPTIDKFTAVQGEPVEITCHFPCKYFSSEKYWCKWNDHGCEDLPTKLSSSGDLVKCNNNLVLTLTLDSVSEDDEGWYWCGAKDGHEFEEVAAVRVELTEPAKVAVEPAKVPVDPAKAAPAPAEEKAKARCPVPRRRQWYPLSRKLRTSCPEPRLLAEEVAVQSAEDPASGSRASVDASSASGQSGSAKVLISTLVPLGLVLAAGAMAVAIARARHRRNVDRVSIGSYRTDISMSDLENSREFGAIDNPSACPDARETALGGKDELATATESTVEIEEPKKAKRSSKEEADLAYSAFLLQSNTIAAEHQDGPKEA.

The first 18 residues, 1-18 (MALFLLTCLLAVFSAATA), serve as a signal peptide directing secretion. Over 19–647 (QSSLLGPSSI…SASGQSGSAK (629 aa)) the chain is Extracellular. The region spanning 25 to 131 (PSSIFGPGEV…RGLDFGVNVL (107 aa)) is the Ig-like V-type 1; required for binding to polymeric IgA and IgM domain. 5 disulfide bridges follow: Cys46-Cys115, Cys155-Cys225, Cys260-Cys324, Cys369-Cys438, and Cys478-Cys538. N-linked (GlcNAc...) asparagine; in variant N-88 glycosylation is present at Lys88. N-linked (GlcNAc...) asparagine glycosylation occurs at Asn108. 4 consecutive Ig-like V-type domains span residues 138-232 (PDDV…SDPT), 233-340 (AEEQ…TQLR), 352-455 (RSPP…LQIV), and 461-557 (PTID…VELT). An N-linked (GlcNAc...) asparagine glycan is attached at Asn418. The tract at residues 619-641 (AVQSAEDPASGSRASVDASSASG) is disordered. Low complexity predominate over residues 632–641 (ASVDASSASG). A helical transmembrane segment spans residues 648–670 (VLISTLVPLGLVLAAGAMAVAIA). Over 671-773 (RARHRRNVDR…AEHQDGPKEA (103 aa)) the chain is Cytoplasmic. A phosphoserine mark is found at Ser682, Ser691, Ser698, and Ser744. The interval 725-746 (ATATESTVEIEEPKKAKRSSKE) is disordered. A compositionally biased stretch (basic and acidic residues) spans 735-746 (EEPKKAKRSSKE).

Interacts (mainly via CDR1-like domain) with dimeric IgA. Interacts (mainly via CDR2-like domain) with pentameric IgM. As to quaternary structure, either free or part of the secretory IgA (sIgA) complex that consists of two, four or five IgA monomers, and two additional non-Ig polypeptides, namely the JCHAIN and the secretory component (the proteolytic product of PIGR). Free secretory component interacts with bacterial antigens toxA of C.difficile and eae of E.coli. N-glycosylated. N-glycosylation is required for anchoring IgA molecules to mucus, but is not necessary for Ig binding.

The protein resides in the cell membrane. The protein localises to the secreted. Its function is as follows. Mediates selective transcytosis of polymeric IgA and IgM across mucosal epithelial cells. Binds polymeric IgA and IgM at the basolateral surface of epithelial cells. The complex is then transported across the cell to be secreted at the apical surface. During this process, a cleavage occurs that separates the extracellular (known as the secretory component) from the transmembrane segment. Through its N-linked glycans ensures anchoring of secretory IgA (sIgA) molecules to mucus lining the epithelial surface to neutralize extracellular pathogens. On its own (free form) may act as a non-specific microbial scavenger to prevent pathogen interaction with epithelial cells. In Oryctolagus cuniculus (Rabbit), this protein is Polymeric immunoglobulin receptor (PIGR).